Reading from the N-terminus, the 402-residue chain is Phosphoglycerate kinase (402 aa).

Residues 24–26 (DFN), Arg40, 63–66 (HFGR), Arg122, and Arg155 each bind substrate. ATP-binding positions include Lys206, Gly297, Glu328, and 357 to 360 (GGDS).

It belongs to the phosphoglycerate kinase family. As to quaternary structure, monomer.

Its subcellular location is the cytoplasm. The catalysed reaction is (2R)-3-phosphoglycerate + ATP = (2R)-3-phospho-glyceroyl phosphate + ADP. The protein operates within carbohydrate degradation; glycolysis; pyruvate from D-glyceraldehyde 3-phosphate: step 2/5. The chain is Phosphoglycerate kinase from Prochlorococcus marinus (strain SARG / CCMP1375 / SS120).